Here is an 846-residue protein sequence, read N- to C-terminus: Protein kintoun (846 aa).

4 disordered regions span residues 216 to 240, 372 to 405, 574 to 631, and 762 to 846; these read TAEE…GKPE, LRHF…DSKA, QALK…ESAC, and KKNQ…EMDD. A compositionally biased stretch (basic and acidic residues) spans 372–382; the sequence is LRHFSREDSGV. A Phosphoserine modification is found at Ser-380. The segment covering 391–400 has biased composition (acidic residues); that stretch reads PVEEDPDGEL. A compositionally biased stretch (basic and acidic residues) spans 583–603; that stretch reads GTKEEEEKGNQDQEPESDKQH. Basic residues-rich tracts occupy residues 611–622 and 762–776; these read KAGKKQRKRNKK and KKNQ…RAQQ. Residue Ser-780 is modified to Phosphoserine. Positions 795-809 are enriched in polar residues; the sequence is LKQQENQSRNCNKPN.

This sequence belongs to the PIH1 family. Kintoun subfamily. As to quaternary structure, interacts with Pp1alpha-96A, Pp1-87B, Pp1-13C and flw.

The protein resides in the cytoplasm. Required for cytoplasmic pre-assembly of axonemal dyneins, thereby playing a central role in motility in cilia and flagella. Involved in pre-assembly of dynein arm complexes in the cytoplasm before intraflagellar transport loads them for the ciliary compartment. The protein is Protein kintoun of Drosophila yakuba (Fruit fly).